Here is a 390-residue protein sequence, read N- to C-terminus: Dual-specificity RNA methyltransferase RlmN (390 aa).

Glutamate 110 acts as the Proton acceptor in catalysis. The Radical SAM core domain occupies 116–355 (EADRATLCVS…VIIRKTRGDD (240 aa)). Cysteine 123 and cysteine 360 form a disulfide bridge. [4Fe-4S] cluster contacts are provided by cysteine 130, cysteine 134, and cysteine 137. Residues 184–185 (GE), serine 216, 238–240 (SLH), and asparagine 317 each bind S-adenosyl-L-methionine. The active-site S-methylcysteine intermediate is cysteine 360.

It belongs to the radical SAM superfamily. RlmN family. [4Fe-4S] cluster is required as a cofactor.

It localises to the cytoplasm. The catalysed reaction is adenosine(2503) in 23S rRNA + 2 reduced [2Fe-2S]-[ferredoxin] + 2 S-adenosyl-L-methionine = 2-methyladenosine(2503) in 23S rRNA + 5'-deoxyadenosine + L-methionine + 2 oxidized [2Fe-2S]-[ferredoxin] + S-adenosyl-L-homocysteine. The enzyme catalyses adenosine(37) in tRNA + 2 reduced [2Fe-2S]-[ferredoxin] + 2 S-adenosyl-L-methionine = 2-methyladenosine(37) in tRNA + 5'-deoxyadenosine + L-methionine + 2 oxidized [2Fe-2S]-[ferredoxin] + S-adenosyl-L-homocysteine. Its function is as follows. Specifically methylates position 2 of adenine 2503 in 23S rRNA and position 2 of adenine 37 in tRNAs. m2A2503 modification seems to play a crucial role in the proofreading step occurring at the peptidyl transferase center and thus would serve to optimize ribosomal fidelity. The polypeptide is Dual-specificity RNA methyltransferase RlmN (Haemophilus influenzae (strain ATCC 51907 / DSM 11121 / KW20 / Rd)).